A 134-amino-acid chain; its full sequence is Phosphomevalonate dehydratase small subunit (134 aa).

S62 functions as the Proton acceptor in the catalytic mechanism.

Belongs to the AcnX type II small subunit family. In terms of assembly, heterodimer composed of a large subunit (PMDh-L) and a small subunit (PMDh-S).

It catalyses the reaction (R)-5-phosphomevalonate = (2E)-3-methyl-5-phosphooxypent-2-enoate + H2O. It participates in isoprenoid biosynthesis; isopentenyl diphosphate biosynthesis via mevalonate pathway. Its function is as follows. Component of a hydro-lyase that catalyzes the dehydration of mevalonate 5-phosphate (MVA5P) to form trans-anhydromevalonate 5-phosphate (tAHMP). Involved in the archaeal mevalonate (MVA) pathway, which provides fundamental precursors for isoprenoid biosynthesis, such as isopentenyl diphosphate (IPP) and dimethylallyl diphosphate (DMAPP). This Pyrococcus horikoshii (strain ATCC 700860 / DSM 12428 / JCM 9974 / NBRC 100139 / OT-3) protein is Phosphomevalonate dehydratase small subunit.